The sequence spans 538 residues: ATP synthase subunit beta, mitochondrial (538 aa).

Position 215 to 222 (G215 to T222) interacts with ATP.

It belongs to the ATPase alpha/beta chains family. Subunit of the F-type ATPase which has 2 components, CF(1) - the catalytic core - and CF(0) - the membrane proton channel. Interacts (via N-terminus) with lov-1 (via PLAT domain). As to expression, expressed in three categories of adult male sensory neurons: tail ray B neurons, HOB hook neuron and head cephalic (CEM) neurons.

The protein localises to the cell projection. The protein resides in the cilium. Its subcellular location is the mitochondrion. It localises to the mitochondrion inner membrane. The catalysed reaction is ATP + H2O + 4 H(+)(in) = ADP + phosphate + 5 H(+)(out). In terms of biological role, mitochondrial membrane ATP synthase (F(1)F(0) ATP synthase or Complex V) produces ATP from ADP in the presence of a proton gradient across the membrane which is generated by electron transport complexes of the respiratory chain. F-type ATPases consist of two structural domains, F(1) - containing the extramembraneous catalytic core, and F(0) - containing the membrane proton channel, linked together by a central stalk and a peripheral stalk. During catalysis, ATP synthesis in the catalytic domain of F(1) is coupled via a rotary mechanism of the central stalk subunits to proton translocation. Subunits alpha and beta form the catalytic core in F(1). Rotation of the central stalk against the surrounding subunits leads to hydrolysis of ATP in three separate catalytic sites on the beta subunits. Required during male mating behavior for the response to hermaphrodite contact, acting with lov-1 and pkd-2. May be involved in polycystin signaling. The protein is ATP synthase subunit beta, mitochondrial of Caenorhabditis elegans.